Reading from the N-terminus, the 341-residue chain is UDP-N-acetylenolpyruvoylglucosamine reductase (341 aa).

In terms of domain architecture, FAD-binding PCMH-type spans 15 to 185 (LAQSCADLVE…TAVGLRLVKR (171 aa)). Residue Arg161 is part of the active site. Ser231 acts as the Proton donor in catalysis. Glu327 is a catalytic residue.

Belongs to the MurB family. Requires FAD as cofactor.

The protein resides in the cytoplasm. The enzyme catalyses UDP-N-acetyl-alpha-D-muramate + NADP(+) = UDP-N-acetyl-3-O-(1-carboxyvinyl)-alpha-D-glucosamine + NADPH + H(+). It functions in the pathway cell wall biogenesis; peptidoglycan biosynthesis. Its function is as follows. Cell wall formation. This chain is UDP-N-acetylenolpyruvoylglucosamine reductase, found in Shewanella baltica (strain OS195).